Consider the following 70-residue polypeptide: Cytochrome c oxidase subunit 8B, mitochondrial (70 aa).

A mitochondrion-targeting transit peptide spans methionine 1–histidine 24. At valine 25–serine 35 the chain is on the mitochondrial matrix side. Residues proline 36–serine 59 traverse the membrane as a helical segment. The Mitochondrial intermembrane portion of the chain corresponds to histidine 60 to threonine 70.

Belongs to the cytochrome c oxidase VIII family. As to quaternary structure, component of the cytochrome c oxidase (complex IV, CIV), a multisubunit enzyme composed of 14 subunits. The complex is composed of a catalytic core of 3 subunits MT-CO1, MT-CO2 and MT-CO3, encoded in the mitochondrial DNA, and 11 supernumerary subunits COX4I, COX5A, COX5B, COX6A, COX6B, COX6C, COX7A, COX7B, COX7C, COX8 and NDUFA4, which are encoded in the nuclear genome. The complex exists as a monomer or a dimer and forms supercomplexes (SCs) in the inner mitochondrial membrane with NADH-ubiquinone oxidoreductase (complex I, CI) and ubiquinol-cytochrome c oxidoreductase (cytochrome b-c1 complex, complex III, CIII), resulting in different assemblies (supercomplex SCI(1)III(2)IV(1) and megacomplex MCI(2)III(2)IV(2)).

Its subcellular location is the mitochondrion inner membrane. It functions in the pathway energy metabolism; oxidative phosphorylation. Functionally, component of the cytochrome c oxidase, the last enzyme in the mitochondrial electron transport chain which drives oxidative phosphorylation. The respiratory chain contains 3 multisubunit complexes succinate dehydrogenase (complex II, CII), ubiquinol-cytochrome c oxidoreductase (cytochrome b-c1 complex, complex III, CIII) and cytochrome c oxidase (complex IV, CIV), that cooperate to transfer electrons derived from NADH and succinate to molecular oxygen, creating an electrochemical gradient over the inner membrane that drives transmembrane transport and the ATP synthase. Cytochrome c oxidase is the component of the respiratory chain that catalyzes the reduction of oxygen to water. Electrons originating from reduced cytochrome c in the intermembrane space (IMS) are transferred via the dinuclear copper A center (CU(A)) of subunit 2 and heme A of subunit 1 to the active site in subunit 1, a binuclear center (BNC) formed by heme A3 and copper B (CU(B)). The BNC reduces molecular oxygen to 2 water molecules using 4 electrons from cytochrome c in the IMS and 4 protons from the mitochondrial matrix. The sequence is that of Cytochrome c oxidase subunit 8B, mitochondrial (COX8B) from Carlito syrichta (Philippine tarsier).